The chain runs to 190 residues: DNA-binding transcriptional repressor TetR (190 aa).

Residues 6 to 66 (ETRSAALLAV…AALDAHDASF (61 aa)) form the HTH tetR-type domain. A DNA-binding region (H-T-H motif) is located at residues 29 to 48 (SMDSVAALAHASKTTIYRRW).

As to quaternary structure, homodimer.

Binds to its own palindromic promoter and represses transcription of its operon; addition of tetracycline or doxycycline (but not tigecycline) interferes with DNA binding. Addition of TetX to the DNA-TetR-antibiotic complex restores DNA binding. This Mycobacteroides abscessus (strain ATCC 19977 / DSM 44196 / CCUG 20993 / CIP 104536 / JCM 13569 / NCTC 13031 / TMC 1543 / L948) (Mycobacterium abscessus) protein is DNA-binding transcriptional repressor TetR.